The following is a 317-amino-acid chain: Transaldolase (317 aa).

Catalysis depends on Lys126, which acts as the Schiff-base intermediate with substrate.

It belongs to the transaldolase family. Type 1 subfamily. Homodimer.

Its subcellular location is the cytoplasm. It carries out the reaction D-sedoheptulose 7-phosphate + D-glyceraldehyde 3-phosphate = D-erythrose 4-phosphate + beta-D-fructose 6-phosphate. The protein operates within carbohydrate degradation; pentose phosphate pathway; D-glyceraldehyde 3-phosphate and beta-D-fructose 6-phosphate from D-ribose 5-phosphate and D-xylulose 5-phosphate (non-oxidative stage): step 2/3. Transaldolase is important for the balance of metabolites in the pentose-phosphate pathway. This is Transaldolase from Burkholderia multivorans (strain ATCC 17616 / 249).